Consider the following 569-residue polypeptide: Formate hydrogenlyase subunit 5 (569 aa).

The propeptide occupies 538–569 (MTVVDVRKKKSKVVPYKELERYSIERKNSPLK).

The protein belongs to the complex I 49 kDa subunit family. FHL comprises of a formate dehydrogenase, unidentified electron carriers and a hydrogenase (isoenzyme 3). In this non-energy conserving pathway molecular hydrogen and carbodioxide from formate are released. It depends on [4Fe-4S] cluster as a cofactor. Ni(2+) is required as a cofactor.

This is Formate hydrogenlyase subunit 5 (hycE) from Escherichia coli (strain K12).